The following is a 413-amino-acid chain: Cardiolipin synthase B (413 aa).

PLD phosphodiesterase domains follow at residues 108-135 (VFRR…SSEH) and 285-312 (RRRP…DPLS). Residues His-113, Lys-115, Asp-120, His-290, Lys-292, and Asp-297 contribute to the active site. The segment at 388 to 413 (TQVDPPAQPTMETQDRVETENTGVNP) is disordered.

Belongs to the phospholipase D family. Cardiolipin synthase subfamily. ClsB sub-subfamily.

It localises to the cell membrane. The catalysed reaction is 2 a 1,2-diacyl-sn-glycero-3-phospho-(1'-sn-glycerol) = a cardiolipin + glycerol. Its function is as follows. Catalyzes the phosphatidyl group transfer from one phosphatidylglycerol molecule to another to form cardiolipin (CL) (diphosphatidylglycerol) and glycerol. This Shigella flexneri protein is Cardiolipin synthase B.